The following is a 958-amino-acid chain: Isoleucine--tRNA ligase (958 aa).

A disordered region spans residues 1 to 32 (MSDNQNKPGKPAAKPQSKYPVNMTDTPFPMRG). The 'HIGH' region signature appears at 71–81 (PYANGDIHLGH). Glutamate 590 is a binding site for L-isoleucyl-5'-AMP. The 'KMSKS' region signature appears at 631 to 635 (KMSKS). Lysine 634 lines the ATP pocket. Zn(2+) contacts are provided by cysteine 921, cysteine 924, cysteine 941, and cysteine 944.

It belongs to the class-I aminoacyl-tRNA synthetase family. IleS type 1 subfamily. In terms of assembly, monomer. The cofactor is Zn(2+).

It localises to the cytoplasm. It catalyses the reaction tRNA(Ile) + L-isoleucine + ATP = L-isoleucyl-tRNA(Ile) + AMP + diphosphate. Its function is as follows. Catalyzes the attachment of isoleucine to tRNA(Ile). As IleRS can inadvertently accommodate and process structurally similar amino acids such as valine, to avoid such errors it has two additional distinct tRNA(Ile)-dependent editing activities. One activity is designated as 'pretransfer' editing and involves the hydrolysis of activated Val-AMP. The other activity is designated 'posttransfer' editing and involves deacylation of mischarged Val-tRNA(Ile). This chain is Isoleucine--tRNA ligase, found in Janthinobacterium sp. (strain Marseille) (Minibacterium massiliensis).